The chain runs to 354 residues: MEFRGDANQRIARISAHLTPQMEAKNSVIGRENCRAKGGNPGFKVAILGAAGGIGQSLSLLMKMNPLVSLLHLYDVVNAPGVTADVSHMDTGAVVRGFLGAKQLEDALTGMDLVIIPAGIPRKPGMTRDDLFKINAGIVKTLCEGVAKCCPNAIVNLISNPVNSTVPIAAEVFKKAGTYDPKKLLGVTTLDVARANTFVAEVLGLDPREVDVPVVGGHAGVTILPLLSQVKPPSSFTPQEIEYLTNRIQNGGTEVVEAKAGAGSATLSMAYAAAKFADACLRGLRGDANVVECSFVASQVTELAFFATKVRLGRTGAEEVYQLGPLNEYERIGLEKAKDELAGSIQKGVEFIRK.

The tract at residues 10-18 (RIARISAHL) is peroxisomal targeting signal PTS2. NAD(+)-binding positions include 49–55 (GAAGGIG) and aspartate 75. Positions 122 and 128 each coordinate substrate. Residues asparagine 135 and 158–160 (ISN) contribute to the NAD(+) site. Substrate is bound by residues asparagine 160 and arginine 194. Catalysis depends on histidine 218, which acts as the Proton acceptor. Methionine 269 lines the NAD(+) pocket.

This sequence belongs to the LDH/MDH superfamily. MDH type 1 family. Homodimer. As to expression, expressed in rosette leaves.

Its subcellular location is the peroxisome. It carries out the reaction (S)-malate + NAD(+) = oxaloacetate + NADH + H(+). Its function is as follows. Catalyzes a reversible NAD-dependent dehydrogenase reaction involved in central metabolism and redox homeostasis between organelle compartments. Peroxisomal NAD-dependent malate dehydrogenase involved in fatty acid beta-oxidation. Reoxidizes NADH from the beta-oxidation and provides NAD for the conversion of fatty acyl-CoA to acetyl-CoA. Does not participate directly in the glyoxylate cycle. Required for maintenance of photosynthetic rates under photorespiratory conditions, and carbon flow during photorespiration. Supplies NADH reductant to the peroxisomal hydroxypyruvate reductase (HPR), which reduces hydroxypyruvate into glycerate in the photorespiratory cycle. In Arabidopsis thaliana (Mouse-ear cress), this protein is Malate dehydrogenase 2, peroxisomal.